The sequence spans 224 residues: MQAPGRGPLGLRLMMPGRRGALREPGGCGSCLGVALALLLLLLPACCPVRAQNDTEPIVLEGKCLVVCDSSPSADGAVTSSLGISVRSGSAKVAFSATRSTNHEPSEMSNRTMTIYFDQVLVNIGNHFDLASSIFVAPRKGIYSFSFHVVKVYNRQTIQVSLMQNGYPVISAFAGDQDVTREAASNGVLLLMEREDKVHLKLERGNLMGGWKYSTFSGFLVFPL.

The N-terminal stretch at 1 to 51 (MQAPGRGPLGLRLMMPGRRGALREPGGCGSCLGVALALLLLLLPACCPVRA) is a signal peptide. N53 and N110 each carry an N-linked (GlcNAc...) asparagine glycan. One can recognise a C1q domain in the interval 88–224 (SGSAKVAFSA…TFSGFLVFPL (137 aa)).

Homohexamer; disulfide-linked homotrimers. The trimers are assembled via the globular C1q domains. The trimers associate via N-terminal cysteine residues to form disulfide-linked hexamers. May form homooligomers or heterooligomers with CBLN1 and CBLN3 prior to secretion. Once secreted, does not interact with other CBLN family members. Interacts with GRID2, and more weakly with GRID1. Interacts with NRXN1 and NRXN2 long and short isoforms produced by alternative promoter usage. Weakly interacts with NRXN3 short isoform and not at all with NRXN3 long isoform.

It localises to the secreted. In terms of biological role, acts as a synaptic organizer in specific subsets of neurons in the brain. Essential for long-term maintenance but not establishment of excitatory synapses. Functions as part of a trans-synaptic complex by binding to postsynaptic GRID1 and presynaptic neurexins. This interaction helps regulate the activity of NMDA and AMPA receptors at hippocampal synapses without affecting synapse formation. NRXN1B-CBLN2-GRID1 complex transduce presynaptic signals into postsynaptic NMDAR response. NRXN3B-CBLN2-GRID1 complex transduce presynaptic signals into postsynaptic AMPAR response. The chain is Cerebellin-2 from Homo sapiens (Human).